The chain runs to 57 residues: Large ribosomal subunit protein bL32 (57 aa).

The segment at 1-20 (MAVQQRRVSKSRKGMRRSHD) is disordered. Basic residues predominate over residues 7–19 (RVSKSRKGMRRSH).

This sequence belongs to the bacterial ribosomal protein bL32 family.

This chain is Large ribosomal subunit protein bL32, found in Ureaplasma urealyticum serovar 10 (strain ATCC 33699 / Western).